We begin with the raw amino-acid sequence, 675 residues long: Zinc finger protein 526 (675 aa).

3 consecutive C2H2-type zinc fingers follow at residues 56–78 (FMCS…QEQH), 108–130 (FQCG…QDAH), and 140–163 (YQCG…KTQH). The tract at residues 160-195 (KTQHLSSAADEPPSPLPPPTPPPPPPPPPPPPPPEV) is disordered. The segment covering 171–194 (PPSPLPPPTPPPPPPPPPPPPPPE) has biased composition (pro residues). A C2H2-type 4 zinc finger spans residues 200 to 222 (YECPECSTLCATPEEFLEHQGTH). Over residues 225–234 (SLEKEEHNGL) the composition is skewed to basic and acidic residues. Residues 225–283 (SLEKEEHNGLEEEEEDEEEGEEEEDDDDEETDEEEASSELTADDTGSNKSTADSAQSCG) form a disordered region. Over residues 235–261 (EEEEEDEEEGEEEEDDDDEETDEEEAS) the composition is skewed to acidic residues. Polar residues predominate over residues 269 to 281 (TGSNKSTADSAQS). 4 consecutive C2H2-type zinc fingers follow at residues 312–334 (FHCS…GRAH), 339–361 (HECT…QRLH), 367–389 (YLCV…RRAH), and 395–416 (HRCR…RRTH). Residues 415-439 (THTGKSGTPTRVATVSPAPAEPTPP) form a disordered region. Positions 418–427 (GKSGTPTRVA) are enriched in polar residues. 5 C2H2-type zinc fingers span residues 447-470 (LPCP…RAVH), 477-499 (HRCG…LRTH), 505-527 (FQCH…QLTH), 533-555 (YQCL…RRLH), and 578-600 (YYCG…QRVH). Residues 606–625 (LTLQPPRSPSPVPPPPPEPQ) are disordered. The span at 611-624 (PRSPSPVPPPPPEP) shows a compositional bias: pro residues.

Belongs to the krueppel C2H2-type zinc-finger protein family.

The protein localises to the nucleus. Functionally, may be involved in transcriptional regulation. The polypeptide is Zinc finger protein 526 (Znf526) (Mus musculus (Mouse)).